The following is a 288-amino-acid chain: Mortality factor 4-like protein 2 (288 aa).

Positions 1–15 are enriched in polar residues; sequence MSSRKQASQTRGQQS. The disordered stretch occupies residues 1 to 115; that stretch reads MSSRKQASQT…DPTVESEEAF (115 aa). Ser-71 carries the post-translational modification Phosphoserine. The MRG domain occupies 117-288; that stretch reads SRMEVKVKIP…ASADYHRKAL (172 aa).

As to quaternary structure, component of the NuA4 histone acetyltransferase complex which contains the catalytic subunit KAT5/TIP60 and the subunits EP400, TRRAP/PAF400, BRD8/SMAP, EPC1, DMAP1/DNMAP1, RUVBL1/TIP49, RUVBL2, ING3, actin, ACTL6A/BAF53A, MORF4L1/MRG15, MORF4L2/MRGX, MRGBP, YEATS4/GAS41 and VPS72/YL1. The NuA4 complex interacts with MYC and the adenovirus E1A protein. MORF4L1 may also participate in the formation of NuA4 related complexes which lack the KAT5/TIP60 catalytic subunit, but which include the SWI/SNF related protein SRCAP. Component of the MSIN3A histone deacetylase complex, which includes SIN3A, HDAC2, ARID4B, MORF4L1, RBBP4/RbAp48, and RBBP7/RbAp46. Interacts with MRFAP1 and RB1. May also interact with one or more as yet undefined members of the TLE (transducin-like enhancer of split) family of transcriptional repressors.

It is found in the nucleus. In terms of biological role, component of the NuA4 histone acetyltransferase complex which is involved in transcriptional activation of select genes principally by acetylation of nucleosomal histone H4 and H2A. This modification may both alter nucleosome - DNA interactions and promote interaction of the modified histones with other proteins which positively regulate transcription. This complex may be required for the activation of transcriptional programs associated with oncogene and proto-oncogene mediated growth induction, tumor suppressor mediated growth arrest and replicative senescence, apoptosis, and DNA repair. The NuA4 complex ATPase and helicase activities seem to be, at least in part, contributed by the association of RUVBL1 and RUVBL2 with EP400. NuA4 may also play a direct role in DNA repair when directly recruited to sites of DNA damage. Also a component of the MSIN3A complex which acts to repress transcription by deacetylation of nucleosomal histones. This Rattus norvegicus (Rat) protein is Mortality factor 4-like protein 2 (Morf4l2).